The primary structure comprises 150 residues: UPF0756 membrane protein A1S_2121 (150 aa).

The next 4 membrane-spanning stretches (helical) occupy residues S22–L42, F45–V65, F83–G103, and V115–V135.

This sequence belongs to the UPF0756 family.

It localises to the cell membrane. The polypeptide is UPF0756 membrane protein A1S_2121 (Acinetobacter baumannii (strain ATCC 17978 / DSM 105126 / CIP 53.77 / LMG 1025 / NCDC KC755 / 5377)).